We begin with the raw amino-acid sequence, 85 residues long: UPF0386 protein MXAN_1729 (85 aa).

It belongs to the UPF0386 family.

This chain is UPF0386 protein MXAN_1729, found in Myxococcus xanthus (strain DK1622).